A 568-amino-acid chain; its full sequence is NADPH oxidase 3 (568 aa).

The Cytoplasmic segment spans residues 1 to 13 (MMGCWILNEGLST). A helical membrane pass occupies residues 14-34 (ILVLSWLGINFYLFIDTFYWY). The Extracellular portion of the chain corresponds to 35 to 51 (EEEESFHYTRVILGSTL). Residues 52–72 (AWARASALCLNFNCMLILIPV) traverse the membrane as a helical segment. The 230-residue stretch at 55–284 (RASALCLNFN…VVLYACERII (230 aa)) folds into the Ferric oxidoreductase domain. Residues 73-103 (SRNLISFIRGTSICCRGPWRRQLDKNLRFHK) are Cytoplasmic-facing. Residues 104–124 (LVAYGIAVNATIHIVAHFFNL) traverse the membrane as a helical segment. The Extracellular segment spans residues 125 to 167 (ERYHWSQSEEAQGLLAALSKLGNTPNESYLNPVRTFPTNTTTE). N-linked (GlcNAc...) asparagine glycosylation occurs at Asn163. The chain crosses the membrane as a helical span at residues 168–188 (LLRTIAGVTGLVISLALVLIM). Over 189-201 (TSSTEFIRQASYE) the chain is Cytoplasmic. Residues 202–222 (LFWYTHHVFIVFFLSLAIHGT) traverse the membrane as a helical segment. Residues 223–395 (GRIVRGQTQD…DGPFGTALTD (173 aa)) are Extracellular-facing. A glycan (N-linked (GlcNAc...) asparagine) is linked at Asn238. The FAD-binding FR-type domain maps to 285-395 (RFWRFQQEVV…DGPFGTALTD (111 aa)). The helical transmembrane segment at 396–416 (VFHYPVCVCVAAGIGVTPFAA) threads the bilayer. Residues 417–568 (LLKSIWYKCS…VHFYYNKESF (152 aa)) lie on the Cytoplasmic side of the membrane.

Interacts with CYBA/p22phox. Heterodimerization with CYBA/p22phox is essential for its activity and cell membrane localization. The cofactor is heme. N-glycosylated in a CYBA/p22phox-dependent manner.

The protein resides in the cell membrane. The enzyme catalyses NADPH + 2 O2 = 2 superoxide + NADP(+) + H(+). Activated by the ototoxic drug cisplatin. Activated by NOXO1. Cooperatively activated by NCF1 and NCF2 or NOXA1 in a phorbol 12-myristate 13-acetate (PMA)-dependent manner. Inhibited by diphenyleneiodonium chloride. NADPH oxidase that catalyzes the generation of superoxide from molecular oxygen utilizing NADPH as an electron donor, upon formation of a complex with CYBA/p22phox. Plays a role in the biogenesis of otoconia/otolith, which are crystalline structures of the inner ear involved in the perception of gravity. The chain is NADPH oxidase 3 (NOX3) from Homo sapiens (Human).